Here is a 203-residue protein sequence, read N- to C-terminus: Putative 3-methyladenine DNA glycosylase (203 aa).

The protein belongs to the DNA glycosylase MPG family.

In Clostridium botulinum (strain Langeland / NCTC 10281 / Type F), this protein is Putative 3-methyladenine DNA glycosylase.